Here is a 563-residue protein sequence, read N- to C-terminus: ATP-dependent RNA helicase DeaD (563 aa).

Residues 13–41 carry the Q motif motif; it reads ATFADLQIHPRVLRAIGDVGYESPTAIQA. Positions 44–215 constitute a Helicase ATP-binding domain; it reads IPALMAGSDV…AKYLHDPFEV (172 aa). Residue 57-64 coordinates ATP; the sequence is AQTGTGKT. The short motif at 163–166 is the DEAD box element; that stretch reads DEAD. Residues 226 to 385 enclose the Helicase C-terminal domain; the sequence is NISQSYIQVA…AQLPTVEDVN (160 aa). Disordered regions lie at residues 441 to 470 and 543 to 563; these read LMAPDPPLSRRNRDQRRDRPQRPKRRPDLT and YRPPDAARRHNGGKPRRKHVG. Over residues 451–461 the composition is skewed to basic and acidic residues; sequence RNRDQRRDRPQ. Basic residues predominate over residues 551 to 563; sequence RHNGGKPRRKHVG.

It belongs to the DEAD box helicase family. DeaD/CsdA subfamily.

Its subcellular location is the cytoplasm. It catalyses the reaction ATP + H2O = ADP + phosphate + H(+). Its function is as follows. DEAD-box RNA helicase involved in various cellular processes at low temperature, including ribosome biogenesis, mRNA degradation and translation initiation. The protein is ATP-dependent RNA helicase DeaD of Mycobacterium tuberculosis (strain CDC 1551 / Oshkosh).